A 348-amino-acid polypeptide reads, in one-letter code: Protein RecA (348 aa).

64–71 serves as a coordination point for ATP; that stretch reads GPESSGKT. A disordered region spans residues 328–348; sequence DTGGAAPAQEDEAQAQEELEF. The span at 336 to 348 shows a compositional bias: acidic residues; sequence QEDEAQAQEELEF.

Belongs to the RecA family.

The protein resides in the cytoplasm. Functionally, can catalyze the hydrolysis of ATP in the presence of single-stranded DNA, the ATP-dependent uptake of single-stranded DNA by duplex DNA, and the ATP-dependent hybridization of homologous single-stranded DNAs. It interacts with LexA causing its activation and leading to its autocatalytic cleavage. This Bacillus licheniformis (strain ATCC 14580 / DSM 13 / JCM 2505 / CCUG 7422 / NBRC 12200 / NCIMB 9375 / NCTC 10341 / NRRL NRS-1264 / Gibson 46) protein is Protein RecA.